The primary structure comprises 56 residues: Large ribosomal subunit protein bL32 (56 aa).

The span at 1–16 (MAVQKNRKTRSKRGMR) shows a compositional bias: basic residues. The tract at residues 1–28 (MAVQKNRKTRSKRGMRRSHDALTTAALS) is disordered.

The protein belongs to the bacterial ribosomal protein bL32 family.

The protein is Large ribosomal subunit protein bL32 of Vibrio campbellii (strain ATCC BAA-1116).